The chain runs to 260 residues: 3'-5' ssDNA/RNA exonuclease TatD (260 aa).

A divalent metal cation-binding residues include glutamate 92, histidine 128, and histidine 153.

This sequence belongs to the metallo-dependent hydrolases superfamily. TatD-type hydrolase family. TatD subfamily. Monomer. It depends on Mg(2+) as a cofactor.

The protein localises to the cytoplasm. 3'-5' exonuclease that prefers single-stranded DNA and RNA. May play a role in the H(2)O(2)-induced DNA damage repair. In Pantoea vagans (strain C9-1) (Pantoea agglomerans (strain C9-1)), this protein is 3'-5' ssDNA/RNA exonuclease TatD.